Consider the following 137-residue polypeptide: MRHGKVHRKLNRTAEHRKAMFANMCAALIKHEQIVTTLPKAKELRPIVEKLVTLGKKGGLALRRQAIAEMRDVDQVKKLFDVLAPRYKDRNGGYTRIIKAGFRYGDNAAMAVIEFVDRDVDAKGQDSGPVQETSEAA.

It belongs to the bacterial ribosomal protein bL17 family. Part of the 50S ribosomal subunit. Contacts protein L32.

The chain is Large ribosomal subunit protein bL17 from Bradyrhizobium sp. (strain BTAi1 / ATCC BAA-1182).